We begin with the raw amino-acid sequence, 303 residues long: S-methyl-5'-thioadenosine phosphorylase 1 (303 aa).

Residues serine 14, 57 to 58 (RH), and 90 to 91 (SA) each bind phosphate. Substrate is bound at residue methionine 198. Serine 199 serves as a coordination point for phosphate. Substrate is bound at residue 222 to 224 (DYD).

Belongs to the PNP/MTAP phosphorylase family. MTAP subfamily. Homotrimer.

It is found in the cytoplasm. The protein localises to the nucleus. The catalysed reaction is S-methyl-5'-thioadenosine + phosphate = 5-(methylsulfanyl)-alpha-D-ribose 1-phosphate + adenine. It participates in amino-acid biosynthesis; L-methionine biosynthesis via salvage pathway; S-methyl-5-thio-alpha-D-ribose 1-phosphate from S-methyl-5'-thioadenosine (phosphorylase route): step 1/1. Catalyzes the reversible phosphorylation of S-methyl-5'-thioadenosine (MTA) to adenine and 5-methylthioribose-1-phosphate. Involved in the breakdown of MTA, a major by-product of polyamine biosynthesis. Responsible for the first step in the methionine salvage pathway after MTA has been generated from S-adenosylmethionine. Has broad substrate specificity with 6-aminopurine nucleosides as preferred substrates. The sequence is that of S-methyl-5'-thioadenosine phosphorylase 1 from Puccinia graminis f. sp. tritici (strain CRL 75-36-700-3 / race SCCL) (Black stem rust fungus).